Here is a 439-residue protein sequence, read N- to C-terminus: Beta-1,3-galactosyl-O-glycosyl-glycoprotein beta-1,6-N-acetylglucosaminyltransferase (439 aa).

Residues 1–11 (MVGWKKKKLCR) lie on the Cytoplasmic side of the membrane. The chain crosses the membrane as a helical; Signal-anchor for type II membrane protein span at residues 12 to 29 (GHHLWVLGCYMLLAVVSL). Over 30–439 (RLSLRFKCDV…RHKAIYGTEL (410 aa)) the chain is Lumenal. 2 N-linked (GlcNAc...) asparagine; by host glycosylation sites follow: Asn-71 and Asn-107. 4 cysteine pairs are disulfide-bonded: Cys-72–Cys-229, Cys-163–Cys-383, Cys-184–Cys-211, and Cys-392–Cys-424.

It belongs to the glycosyltransferase 14 family.

It is found in the host Golgi apparatus membrane. It catalyses the reaction a 3-O-[beta-D-galactosyl-(1-&gt;3)-N-acetyl-alpha-D-galactosaminyl]-L-seryl-[protein] + UDP-N-acetyl-alpha-D-glucosamine = 3-O-{beta-D-galactosyl-(1-&gt;3)-[N-acetyl-beta-D-glucosaminyl-(1-&gt;6)]-N-acetyl-alpha-D-galactosaminyl}-L-seryl-[protein] + UDP + H(+). The enzyme catalyses a 3-O-[beta-D-galactosyl-(1-&gt;3)-N-acetyl-alpha-D-galactosaminyl]-L-threonyl-[protein] + UDP-N-acetyl-alpha-D-glucosamine = a 3-O-{beta-D-galactosyl-(1-&gt;3)-[N-acetyl-beta-D-glucosaminyl-(1-&gt;6)]-N-acetyl-alpha-D-galactosaminyl}-L-threonyl-[protein] + UDP + H(+). It carries out the reaction a beta-D-Gal-(1-&gt;4)-beta-D-GlcNAc-(1-&gt;3)-beta-D-Gal-(1-&gt;4)-beta-D-GlcNAc derivative + UDP-N-acetyl-alpha-D-glucosamine = a beta-D-Gal-(1-&gt;4)-beta-D-GlcNAc-(1-&gt;3)-[beta-D-GlcNAc-(1-&gt;6)]-beta-D-Gal-(1-&gt;4)-N-acetyl-beta-D-glucosaminyl derivative + UDP + H(+). The catalysed reaction is 3-O-[N-acetyl-beta-D-glucosaminyl-(1-&gt;3)-N-acetyl-alpha-D-galactosaminyl]-L-seryl-[protein] + UDP-N-acetyl-alpha-D-glucosamine = 3-O-[N-acetyl-beta-D-glucosaminyl-(1-&gt;3)-[N-acetyl-beta-D-glucosaminyl-(1-&gt;6)]-N-acetyl-alpha-D-galactosaminyl]-L-seryl-[protein] + UDP + H(+). It catalyses the reaction a 3-O-[N-acetyl-beta-D-glucosaminyl-(1-&gt;3)-N-acetyl-alpha-D-galactosaminyl]-L-threonyl-[protein] + UDP-N-acetyl-alpha-D-glucosamine = 3-O-[N-acetyl-beta-D-glucosaminyl-(1-&gt;3)-[N-acetyl-beta-D-glucosaminyl-(1-&gt;6)]-N-acetyl-alpha-D-galactosaminyl]-L-threonyl-[protein] + UDP + H(+). It functions in the pathway protein modification; protein glycosylation. Non-essential glycosyltransferase that can synthesize all known mucin beta 6 N-acetylglucosaminides. Mediates core 2 and core 4 O-glycan branching, 2 important steps in mucin-type biosynthesis. Has also I-branching enzyme activity by converting linear into branched poly-N-acetyllactosaminoglycans. Contributes to the post-translational modifications of structural proteins. The protein is Beta-1,3-galactosyl-O-glycosyl-glycoprotein beta-1,6-N-acetylglucosaminyltransferase (Bo17) of Bovine herpesvirus 4 (BoHV-4).